A 1916-amino-acid polypeptide reads, in one-letter code: Endoribonuclease Dicer (1916 aa).

One can recognise a Helicase ATP-binding domain in the interval 51–227 (LLEAALDHNT…ELEEKIQKLE (177 aa)). Residue 64–71 (LNTGSGKT) participates in ATP binding. The DECH box motif lies at 175–178 (DECH). The tract at residues 256–595 (DCGPFTDRSG…LRNKCSKSAD (340 aa)) is required for interaction with PRKRA and TARBP2. The segment at 409–433 (YVSWSDSEDDDDDEEIEEKEKPETN) is disordered. Residues S413 and S415 each carry the phosphoserine modification. Acidic residues predominate over residues 414–425 (DSEDDDDDEEIE). Residues 433–602 (NFPSPFTNIL…SADGAEADVH (170 aa)) form the Helicase C-terminal domain. The Dicer dsRNA-binding fold domain maps to 630–722 (AIGHINRYCA…MPVGKETVKY (93 aa)). Positions 726-745 (LDLHDEEETSVPGRPGSTKR) are disordered. Residues 895–1042 (KFMEDIEKSE…LVPELCAIHP (148 aa)) form the PAZ domain. Residues S1016 and S1160 each carry the phosphoserine modification. Positions 1276-1403 (DSEQSPSVGY…SEKWEKDEMT (128 aa)) constitute an RNase III 1 domain. Residues E1316, E1395, and E1398 each contribute to the Mg(2+) site. S1456, S1464, and S1466 each carry phosphoserine. The disordered stretch occupies residues 1598-1626 (ALDPAQENGSSQQKSLSGSCAAPVGPRSS). The segment covering 1604–1615 (ENGSSQQKSLSG) has biased composition (polar residues). Residues 1660–1818 (FETFEKKINY…LAGAIYMDSG (159 aa)) enclose the RNase III 2 domain. Residues E1699, D1804, and E1807 each coordinate Mg(2+). The 66-residue stretch at 1843–1908 (VPRSPVRELL…ARRALRSLKA (66 aa)) folds into the DRBM domain. S1862 carries the phosphoserine modification.

It belongs to the helicase family. Dicer subfamily. As to quaternary structure, component of the RISC loading complex (RLC), or micro-RNA (miRNA) loading complex (miRLC), which is composed of DICER1, AGO2 and TARBP2; DICER1 and TARBP2 are required to process precursor miRNAs (pre-miRNAs) to mature miRNAs and then load them onto AGO2. Note that the trimeric RLC/miRLC is also referred to as RISC. Interacts with DHX9, AGO1, PIWIL1 and PRKRA. Interacts with AGO2, TARBP2, EIF6, MOV10 and RPL7A (60S ribosome subunit); they form a large RNA-induced silencing complex (RISC). Interacts with BCDIN3D. Interacts (via Dicer dsRNA-binding fold domain) with ALOX5 (via PLAT domain); this interaction enhances arachidonate 5-lipoxygenase activity and modifies the miRNA precursor processing activity of DICER1. Mg(2+) is required as a cofactor. Mn(2+) serves as cofactor. In terms of tissue distribution, isoform 1 is expressed in a wide variety of tissues. Isoform 2 is specifically expressed in oocytes during their growth (at protein level).

It is found in the cytoplasm. It carries out the reaction Endonucleolytic cleavage to 5'-phosphomonoester.. Functionally, double-stranded RNA (dsRNA) endoribonuclease playing a central role in short dsRNA-mediated post-transcriptional gene silencing. Cleaves naturally occurring long dsRNAs and short hairpin pre-microRNAs (miRNA) into fragments of twenty-one to twenty-three nucleotides with 3' overhang of two nucleotides, producing respectively short interfering RNAs (siRNA) and mature microRNAs. SiRNAs and miRNAs serve as guide to direct the RNA-induced silencing complex (RISC) to complementary RNAs to degrade them or prevent their translation. Gene silencing mediated by siRNAs, also called RNA interference, controls the elimination of transcripts from mobile and repetitive DNA elements of the genome but also the degradation of exogenous RNA of viral origin for instance. The miRNA pathway on the other side is a mean to specifically regulate the expression of target genes. More active than isoform 1 to process long double-stranded RNA into siRNAs. Responsible for the accumulation of endogenous siRNAs observed in mouse oocytes compared to somatic cells and it regulates meiotic spindle organization in female germline. The protein is Endoribonuclease Dicer (Dicer1) of Mus musculus (Mouse).